Consider the following 430-residue polypeptide: Aspartate aminotransferase, mitochondrial (430 aa).

Residues 1-29 constitute a mitochondrion transit peptide; it reads MALLHSGRVLPGIAAAFHPGLAAAASARA. Phosphothreonine is present on Thr48. Lys59 bears the N6-acetyllysine mark. Gly65 provides a ligand contact to substrate. Lys73 bears the N6-acetyllysine; alternate mark. The residue at position 73 (Lys73) is an N6-succinyllysine; alternate. Lys82 is modified (N6-acetyllysine). At Lys90 the chain carries N6-acetyllysine; alternate. Lys90 is subject to N6-succinyllysine; alternate. 3'-nitrotyrosine; alternate is present on Tyr96. Tyr96 is modified (phosphotyrosine; alternate). Residues Lys107 and Lys122 each carry the N6-acetyllysine; alternate modification. Lys107 and Lys122 each carry N6-succinyllysine; alternate. Ser143 carries the post-translational modification Phosphoserine. Lys159 carries the N6-acetyllysine; alternate modification. Lys159 carries the N6-succinyllysine; alternate modification. Residue Trp162 coordinates substrate. At Lys185 the chain carries N6-acetyllysine; alternate. At Lys185 the chain carries N6-succinyllysine; alternate. Asn215 provides a ligand contact to substrate. Residue Lys227 is modified to N6-succinyllysine. Lys234 carries the post-translational modification N6-acetyllysine. An N6-acetyllysine; alternate mark is found at Lys279 and Lys296. Lys279 is subject to N6-(pyridoxal phosphate)lysine; alternate. An N6-succinyllysine; alternate modification is found at Lys296. Lys302 is subject to N6-acetyllysine. An N6-acetyllysine; alternate modification is found at Lys309. An N6-succinyllysine; alternate modification is found at Lys309. An Asymmetric dimethylarginine modification is found at Arg313. Thr333 carries the post-translational modification Phosphothreonine. At Lys338 the chain carries N6-acetyllysine; alternate. Position 338 is an N6-succinyllysine; alternate (Lys338). Lys345 is modified (N6-acetyllysine). An N6-acetyllysine; alternate modification is found at Lys363. Lys363 is subject to N6-succinyllysine; alternate. N6-acetyllysine is present on residues Lys364 and Lys387. An N6-acetyllysine; alternate mark is found at Lys396 and Lys404. 2 positions are modified to N6-succinyllysine; alternate: Lys396 and Lys404. Arg407 provides a ligand contact to substrate.

It belongs to the class-I pyridoxal-phosphate-dependent aminotransferase family. In terms of assembly, homodimer. The cofactor is pyridoxal 5'-phosphate.

It is found in the mitochondrion matrix. The protein resides in the cell membrane. The enzyme catalyses L-aspartate + 2-oxoglutarate = oxaloacetate + L-glutamate. The catalysed reaction is L-kynurenine + 2-oxoglutarate = kynurenate + L-glutamate + H2O. Functionally, catalyzes the irreversible transamination of the L-tryptophan metabolite L-kynurenine to form kynurenic acid (KA). As a member of the malate-aspartate shuttle, it has a key role in the intracellular NAD(H) redox balance. Is important for metabolite exchange between mitochondria and cytosol, and for amino acid metabolism. Facilitates cellular uptake of long-chain free fatty acids. This is Aspartate aminotransferase, mitochondrial from Homo sapiens (Human).